The primary structure comprises 386 residues: Acetylornithine aminotransferase (386 aa).

Residues 94 to 95 (GT) and Phe-121 each bind pyridoxal 5'-phosphate. Arg-124 contributes to the N(2)-acetyl-L-ornithine binding site. 206–209 (DEVQ) is a pyridoxal 5'-phosphate binding site. Residue Lys-235 is modified to N6-(pyridoxal phosphate)lysine. Ser-263 serves as a coordination point for N(2)-acetyl-L-ornithine. Thr-264 contributes to the pyridoxal 5'-phosphate binding site.

It belongs to the class-III pyridoxal-phosphate-dependent aminotransferase family. ArgD subfamily. In terms of assembly, homodimer. It depends on pyridoxal 5'-phosphate as a cofactor.

It is found in the cytoplasm. The enzyme catalyses N(2)-acetyl-L-ornithine + 2-oxoglutarate = N-acetyl-L-glutamate 5-semialdehyde + L-glutamate. The protein operates within amino-acid biosynthesis; L-arginine biosynthesis; N(2)-acetyl-L-ornithine from L-glutamate: step 4/4. This chain is Acetylornithine aminotransferase, found in Listeria monocytogenes serotype 4b (strain F2365).